The chain runs to 521 residues: Probable feruloyl esterase B (521 aa).

An N-terminal signal peptide occupies residues 1 to 17 (MKVSSLLSVALPGAALA). Cystine bridges form between Cys26–Cys72 and Cys61–Cys111. N-linked (GlcNAc...) asparagine glycans are attached at residues Asn37, Asn51, Asn77, Asn95, Asn144, and Asn177. 3 disulfides stabilise this stretch: Cys184/Cys438, Cys253/Cys270, and Cys279/Cys288. Ser185 functions as the Acyl-ester intermediate in the catalytic mechanism. Residues Asp254, Asp257, Ala259, Asp261, and Ile263 each coordinate Ca(2+). N-linked (GlcNAc...) asparagine glycans are attached at residues Asn284, Asn347, Asn352, and Asn378. Residues Asp397 and His437 each act as charge relay system in the active site. N-linked (GlcNAc...) asparagine glycosylation is found at Asn488 and Asn511. The cysteines at positions 498 and 520 are disulfide-linked.

It belongs to the tannase family.

It is found in the secreted. The catalysed reaction is feruloyl-polysaccharide + H2O = ferulate + polysaccharide.. Involved in degradation of plant cell walls. Hydrolyzes the feruloyl-arabinose ester bond in arabinoxylans as well as the feruloyl-galactose and feruloyl-arabinose ester bonds in pectin. The polypeptide is Probable feruloyl esterase B (faeB) (Aspergillus niger (strain ATCC MYA-4892 / CBS 513.88 / FGSC A1513)).